A 311-amino-acid chain; its full sequence is LOB domain-containing protein 10 (311 aa).

One can recognise an LOB domain in the interval 4-105 (TPCAACKLLR…QDLLTAKEEL (102 aa)). The span at 264-277 (LQEGQEQTEEGQFL) shows a compositional bias: low complexity. A disordered region spans residues 264–311 (LQEGQEQTEEGQFLMQPMGQENLHDEEEEEELEPPVKWRMSENKEASF). The segment covering 287–296 (HDEEEEEELE) has biased composition (acidic residues). Residues 297–311 (PPVKWRMSENKEASF) show a composition bias toward basic and acidic residues.

It belongs to the LOB domain-containing protein family.

The polypeptide is LOB domain-containing protein 10 (LBD10) (Arabidopsis thaliana (Mouse-ear cress)).